The chain runs to 307 residues: tRNA pseudouridine synthase B (307 aa).

D48 functions as the Nucleophile in the catalytic mechanism.

This sequence belongs to the pseudouridine synthase TruB family. Type 1 subfamily.

It catalyses the reaction uridine(55) in tRNA = pseudouridine(55) in tRNA. Functionally, responsible for synthesis of pseudouridine from uracil-55 in the psi GC loop of transfer RNAs. The protein is tRNA pseudouridine synthase B of Pasteurella multocida (strain Pm70).